The sequence spans 189 residues: ATP synthase subunit delta (189 aa).

It belongs to the ATPase delta chain family. In terms of assembly, F-type ATPases have 2 components, F(1) - the catalytic core - and F(0) - the membrane proton channel. F(1) has five subunits: alpha(3), beta(3), gamma(1), delta(1), epsilon(1). F(0) has three main subunits: a(1), b(2) and c(10-14). The alpha and beta chains form an alternating ring which encloses part of the gamma chain. F(1) is attached to F(0) by a central stalk formed by the gamma and epsilon chains, while a peripheral stalk is formed by the delta and b chains.

It is found in the cell inner membrane. In terms of biological role, f(1)F(0) ATP synthase produces ATP from ADP in the presence of a proton or sodium gradient. F-type ATPases consist of two structural domains, F(1) containing the extramembraneous catalytic core and F(0) containing the membrane proton channel, linked together by a central stalk and a peripheral stalk. During catalysis, ATP synthesis in the catalytic domain of F(1) is coupled via a rotary mechanism of the central stalk subunits to proton translocation. Functionally, this protein is part of the stalk that links CF(0) to CF(1). It either transmits conformational changes from CF(0) to CF(1) or is implicated in proton conduction. In Ehrlichia ruminantium (strain Gardel), this protein is ATP synthase subunit delta.